The primary structure comprises 268 residues: CCAAT/enhancer-binding protein delta (268 aa).

Disordered regions lie at residues 1–50 (MSAA…STTP), 98–132 (LELL…DAPG), and 152–223 (AAQP…QQKL). Position 2 is an N-acetylserine (serine 2). Residue lysine 120 forms a Glycyl lysine isopeptide (Lys-Gly) (interchain with G-Cter in SUMO) linkage. Residues 155–173 (PTPPTSPEPPRGSPGPSLA) are compositionally biased toward pro residues. The segment covering 177–201 (VREKGAGKRGPDRGSPEYRQRRERN) has biased composition (basic and acidic residues). In terms of domain architecture, bZIP spans 191 to 254 (SPEYRQRRER…ASLRQFFKEL (64 aa)). Residues 195–222 (RQRRERNNIAVRKSRDKAKRRNQEMQQK) are basic motif. Positions 226 to 254 (LSAENEKLHQRVEQLTRDLASLRQFFKEL) are leucine-zipper.

This sequence belongs to the bZIP family. C/EBP subfamily. As to quaternary structure, binds DNA as a homodimer and as a heterodimer. Can form stable heterodimers with CEBPA, CEBPB and CEBPE. Directly interacts with SPI1/PU.1; this interaction does not affect DNA-binding properties of each partner. Interacts with PRDM16. Ubiquitously expressed.

The protein resides in the nucleus. Its function is as follows. Transcription activator that recognizes two different DNA motifs: the CCAAT homology common to many promoters and the enhanced core homology common to many enhancers. Important transcription factor regulating the expression of genes involved in immune and inflammatory responses. Transcriptional activator that enhances IL6 transcription alone and as heterodimer with CEBPB. This Rattus norvegicus (Rat) protein is CCAAT/enhancer-binding protein delta (Cebpd).